Reading from the N-terminus, the 3674-residue chain is Spectrin beta chain, non-erythrocytic 5 (3674 aa).

Positions 1–37 are disordered; sequence MAGQPHSPRELLGAAGHRSRRPSTELRVPPSPSLTMD. The interval 1 to 279 is actin-binding; sequence MAGQPHSPRE…IMTYVSLYYH (279 aa). Calponin-homology (CH) domains follow at residues 54–159 and 177–282; these read QMQE…LRFQ and LSTK…HYCS. Spectrin repeat units lie at residues 307–416, 428–529, 642–742, 747–810, 900–996, 1103–1206, 1209–1311, and 1315–1417; these read LQTQ…ALQQ, ARRF…RKQV, AEFL…ARLQ, VLQY…QGRA, GFCS…AVQL, ARQS…WLQE, ELQK…RQLL, and QLQE…ELQQ. Positions 1441–1469 are disordered; that stretch reads ALQSSETGQDLRSSQRLQKRHQQLESESR. Over residues 1442–1456 the composition is skewed to polar residues; that stretch reads LQSSETGQDLRSSQR. Spectrin repeat units lie at residues 1521–1624, 1628–1727, 1731–1835, 1842–1940, 1944–2046, 2052–2146, 2150–2253, 2256–2361, 2366–2467, 2471–2574, 2577–2680, 2683–2784, 2791–2890, 2894–2997, 3000–3103, 3106–3209, 3213–3311, 3318–3415, and 3422–3488; these read ELHQ…CLQQ, FQQY…RELE, RLHE…ALRD, VHRD…AQLE, LLAR…ERLQ, QLFL…HALH, LMAS…ELED, NFLE…QQLE, IHVL…EALD, QAQK…QLQQ, ELQL…RLEE, QLQA…AKLQ, RLRR…TALE, LLLK…LLQQ, EAQQ…GLQE, QLHQ…ENLA, EVHS…QWLA, AFLG…RWQR, and LQKL…EQEL. The PH domain maps to 3533–3641; that stretch reads TPTMEGSLEF…WWRALGSTAA (109 aa).

The protein belongs to the spectrin family. As to quaternary structure, probably associates with an alpha chain. Interacts (via C-terminus) with TRPC4. In terms of tissue distribution, expressed at very low levels in many tissues, with strongest expression in cerebellum, spinal cord, stomach, pituitary gland, liver, pancreas, salivary gland, kidney, bladder, and heart.

The protein resides in the cytoplasm. Its subcellular location is the cytoskeleton. This Homo sapiens (Human) protein is Spectrin beta chain, non-erythrocytic 5 (SPTBN5).